The primary structure comprises 606 residues: Glutamine--fructose-6-phosphate aminotransferase [isomerizing] (606 aa).

The active-site Nucleophile; for GATase activity is Cys-2. The Glutamine amidotransferase type-2 domain occupies 2 to 217 (CGIVGMVGEN…DGDVMVLRKD (216 aa)). 2 SIS domains span residues 284–423 (YEEL…INGY) and 455–596 (LSEK…PDKP). Lys-601 (for Fru-6P isomerization activity) is an active-site residue.

Homodimer.

It localises to the cytoplasm. The catalysed reaction is D-fructose 6-phosphate + L-glutamine = D-glucosamine 6-phosphate + L-glutamate. Functionally, catalyzes the first step in hexosamine metabolism, converting fructose-6P into glucosamine-6P using glutamine as a nitrogen source. This Thermotoga maritima (strain ATCC 43589 / DSM 3109 / JCM 10099 / NBRC 100826 / MSB8) protein is Glutamine--fructose-6-phosphate aminotransferase [isomerizing].